Here is a 559-residue protein sequence, read N- to C-terminus: Thrombospondin-related anonymous protein (559 aa).

An N-terminal signal peptide occupies residues 1 to 25 (MNHLGNVKYLVIVFLIFFDLFLVNG). Over 26 to 496 (RDVQNNIVDE…KKGESDNKYK (471 aa)) the chain is Extracellular. The region spanning 48–234 (DLYLLMDCSG…NVIGPFMKAV (187 aa)) is the VWFA domain. Isoglutamyl lysine isopeptide (Gln-Lys) (interchain with K-? in Factor 3(A)) cross-links involve residues Gln77 and Gln78. N-linked (GlcNAc...) asparagine glycosylation is present at Asn132. A TSP type-1 domain is found at 241 to 287 (TASCGVWDEWSPCSVTCGKGTRSRKREILHEGCTSEIQEQCEEERCP). Intrachain disulfides connect Cys244–Cys273, Cys253–Cys281, and Cys257–Cys286. The disordered stretch occupies residues 280–496 (QCEEERCPPK…KKGESDNKYK (217 aa)). A compositionally biased stretch (basic and acidic residues) spans 283–292 (EERCPPKWEP). The Cell attachment site motif lies at 307 to 309 (RGD). Residue Asn310 is glycosylated (N-linked (GlcNAc...) asparagine). Positions 370–400 (KEVPSDVPKNPEDDREENFDIPKKPENKHDN) are enriched in basic and acidic residues. Over residues 431-440 (DPQSQDNNGN) the composition is skewed to polar residues. Residues 444–459 (PNSEDRETRPHGRNNE) are compositionally biased toward basic and acidic residues. A glycan (N-linked (GlcNAc...) asparagine) is linked at Asn460. Positions 466–495 (KYNDTPKHPEREEHEKPDNNKKKGESDNKY) are enriched in basic and acidic residues. A helical transmembrane segment spans residues 497–515 (IAGGIAGGLALLACAGLAY). Over 516 to 559 (KFVVPGAATPYAGEPAPFDETLGEEDKDLDEPEQFRLPEENEWN) the chain is Cytoplasmic. Residues 523–559 (ATPYAGEPAPFDETLGEEDKDLDEPEQFRLPEENEWN) are disordered. Residues 536–547 (TLGEEDKDLDEP) show a composition bias toward acidic residues. The segment covering 548-559 (EQFRLPEENEWN) has biased composition (basic and acidic residues).

It localises to the cell membrane. This is Thrombospondin-related anonymous protein (TRAP) from Plasmodium falciparum.